The chain runs to 154 residues: MSELCPCGSILNYHECCGPYILGTQVAAKPAILMRSRYCAYVEKNVDYLIATWHPDCHAQEWRESIIQGFTKTVWHGLTVIADTPGRHPDEAFVEFIARFTDADNAQITAMHERSRFLRIKEHWYYIDGIRPSLGRNDTCLCGSGKKHKKCCGR.

This sequence belongs to the UPF0225 family.

This Yersinia pseudotuberculosis serotype O:1b (strain IP 31758) protein is UPF0225 protein YpsIP31758_1970.